The primary structure comprises 883 residues: Alanine--tRNA ligase (883 aa).

Residues H562, H566, C675, and H679 each contribute to the Zn(2+) site.

It belongs to the class-II aminoacyl-tRNA synthetase family. It depends on Zn(2+) as a cofactor.

The protein resides in the cytoplasm. The catalysed reaction is tRNA(Ala) + L-alanine + ATP = L-alanyl-tRNA(Ala) + AMP + diphosphate. In terms of biological role, catalyzes the attachment of alanine to tRNA(Ala) in a two-step reaction: alanine is first activated by ATP to form Ala-AMP and then transferred to the acceptor end of tRNA(Ala). Also edits incorrectly charged Ser-tRNA(Ala) and Gly-tRNA(Ala) via its editing domain. In Ruegeria sp. (strain TM1040) (Silicibacter sp.), this protein is Alanine--tRNA ligase.